A 1503-amino-acid chain; its full sequence is DNA-directed RNA polymerase subunit beta' (1503 aa).

C60, C62, C75, and C78 together coordinate Zn(2+). Residues D626, D628, and D630 each coordinate Mg(2+). Residues C1002, C1075, C1082, and C1085 each coordinate Zn(2+). Positions 1439-1503 (EESQQAEEAP…EEEDNDLPAF (65 aa)) are disordered. Positions 1486 to 1503 (GDNDQSDAEEEDNDLPAF) are enriched in acidic residues.

It belongs to the RNA polymerase beta' chain family. As to quaternary structure, the RNAP catalytic core consists of 2 alpha, 1 beta, 1 beta' and 1 omega subunit. When a sigma factor is associated with the core the holoenzyme is formed, which can initiate transcription. The cofactor is Mg(2+). It depends on Zn(2+) as a cofactor.

It catalyses the reaction RNA(n) + a ribonucleoside 5'-triphosphate = RNA(n+1) + diphosphate. Functionally, DNA-dependent RNA polymerase catalyzes the transcription of DNA into RNA using the four ribonucleoside triphosphates as substrates. The protein is DNA-directed RNA polymerase subunit beta' of Chloroflexus aurantiacus (strain ATCC 29364 / DSM 637 / Y-400-fl).